The following is a 386-amino-acid chain: Succinate--CoA ligase [ADP-forming] subunit beta (386 aa).

An ATP-grasp domain is found at 9–244 (KAVLRSYGVS…LDEEDAKEIE (236 aa)). ATP-binding positions include K46, 53-55 (GRG), E99, C102, and E107. Positions 199 and 213 each coordinate Mg(2+). Substrate is bound by residues N264 and 321–323 (GIM).

This sequence belongs to the succinate/malate CoA ligase beta subunit family. As to quaternary structure, heterotetramer of two alpha and two beta subunits. Mg(2+) is required as a cofactor.

The enzyme catalyses succinate + ATP + CoA = succinyl-CoA + ADP + phosphate. It carries out the reaction GTP + succinate + CoA = succinyl-CoA + GDP + phosphate. It functions in the pathway carbohydrate metabolism; tricarboxylic acid cycle; succinate from succinyl-CoA (ligase route): step 1/1. Succinyl-CoA synthetase functions in the citric acid cycle (TCA), coupling the hydrolysis of succinyl-CoA to the synthesis of either ATP or GTP and thus represents the only step of substrate-level phosphorylation in the TCA. The beta subunit provides nucleotide specificity of the enzyme and binds the substrate succinate, while the binding sites for coenzyme A and phosphate are found in the alpha subunit. This is Succinate--CoA ligase [ADP-forming] subunit beta from Bacillus anthracis (strain A0248).